Here is a 46-residue protein sequence, read N- to C-terminus: Esculentin-1R (46 aa).

Cysteines 40 and 46 form a disulfide.

Expressed by the skin glands.

It is found in the secreted. Functionally, shows antibacterial activity against representative Gram-negative and Gram-positive bacterial species, and hemolytic activity. This chain is Esculentin-1R, found in Pelophylax ridibundus (Marsh frog).